The chain runs to 163 residues: 2-C-methyl-D-erythritol 2,4-cyclodiphosphate synthase (163 aa).

The a divalent metal cation site is built by Asp-9 and His-11. 4-CDP-2-C-methyl-D-erythritol 2-phosphate-binding positions include 9-11 (DVH) and 36-37 (HS). His-44 contributes to the a divalent metal cation binding site. Residues 58–60 (DIG), 63–67 (FPDDD), 134–137 (TTSE), Phe-141, and Arg-144 contribute to the 4-CDP-2-C-methyl-D-erythritol 2-phosphate site.

This sequence belongs to the IspF family. As to quaternary structure, homotrimer. It depends on a divalent metal cation as a cofactor.

The catalysed reaction is 4-CDP-2-C-methyl-D-erythritol 2-phosphate = 2-C-methyl-D-erythritol 2,4-cyclic diphosphate + CMP. Its pathway is isoprenoid biosynthesis; isopentenyl diphosphate biosynthesis via DXP pathway; isopentenyl diphosphate from 1-deoxy-D-xylulose 5-phosphate: step 4/6. Its function is as follows. Involved in the biosynthesis of isopentenyl diphosphate (IPP) and dimethylallyl diphosphate (DMAPP), two major building blocks of isoprenoid compounds. Catalyzes the conversion of 4-diphosphocytidyl-2-C-methyl-D-erythritol 2-phosphate (CDP-ME2P) to 2-C-methyl-D-erythritol 2,4-cyclodiphosphate (ME-CPP) with a corresponding release of cytidine 5-monophosphate (CMP). The protein is 2-C-methyl-D-erythritol 2,4-cyclodiphosphate synthase of Halorhodospira halophila (strain DSM 244 / SL1) (Ectothiorhodospira halophila (strain DSM 244 / SL1)).